The chain runs to 199 residues: Small ribosomal subunit protein eS6 (199 aa).

Positions 172-183 (KEQREKRSESLA) are enriched in basic and acidic residues. Positions 172 to 199 (KEQREKRSESLAKKRSRLSAASKPSIAA) are disordered.

It belongs to the eukaryotic ribosomal protein eS6 family. Post-translationally, ribosomal protein S6 is the major substrate of protein kinases in eukaryote ribosomes.

In terms of biological role, component of the 40S small ribosomal subunit. Plays an important role in controlling cell growth and proliferation through the selective translation of particular classes of mRNA. In Nicotiana tabacum (Common tobacco), this protein is Small ribosomal subunit protein eS6 (RPS6).